Consider the following 214-residue polypeptide: Thiamine-phosphate synthase (214 aa).

4-amino-2-methyl-5-(diphosphooxymethyl)pyrimidine is bound by residues 37–41 (QYREK) and Asn73. Residues Asp74 and Asp93 each coordinate Mg(2+). Ser112 lines the 4-amino-2-methyl-5-(diphosphooxymethyl)pyrimidine pocket. Residue 139-141 (TIS) participates in 2-[(2R,5Z)-2-carboxy-4-methylthiazol-5(2H)-ylidene]ethyl phosphate binding. Residue Lys142 participates in 4-amino-2-methyl-5-(diphosphooxymethyl)pyrimidine binding. Residues Gly171 and 191–192 (IS) each bind 2-[(2R,5Z)-2-carboxy-4-methylthiazol-5(2H)-ylidene]ethyl phosphate.

It belongs to the thiamine-phosphate synthase family. Requires Mg(2+) as cofactor.

The enzyme catalyses 2-[(2R,5Z)-2-carboxy-4-methylthiazol-5(2H)-ylidene]ethyl phosphate + 4-amino-2-methyl-5-(diphosphooxymethyl)pyrimidine + 2 H(+) = thiamine phosphate + CO2 + diphosphate. The catalysed reaction is 2-(2-carboxy-4-methylthiazol-5-yl)ethyl phosphate + 4-amino-2-methyl-5-(diphosphooxymethyl)pyrimidine + 2 H(+) = thiamine phosphate + CO2 + diphosphate. It carries out the reaction 4-methyl-5-(2-phosphooxyethyl)-thiazole + 4-amino-2-methyl-5-(diphosphooxymethyl)pyrimidine + H(+) = thiamine phosphate + diphosphate. The protein operates within cofactor biosynthesis; thiamine diphosphate biosynthesis; thiamine phosphate from 4-amino-2-methyl-5-diphosphomethylpyrimidine and 4-methyl-5-(2-phosphoethyl)-thiazole: step 1/1. In terms of biological role, condenses 4-methyl-5-(beta-hydroxyethyl)thiazole monophosphate (THZ-P) and 2-methyl-4-amino-5-hydroxymethyl pyrimidine pyrophosphate (HMP-PP) to form thiamine monophosphate (TMP). This is Thiamine-phosphate synthase from Listeria monocytogenes serovar 1/2a (strain ATCC BAA-679 / EGD-e).